The chain runs to 351 residues: D-threonate 4-phosphate dehydrogenase (351 aa).

Substrate-binding residues include H147 and T148. H177, H221, and H276 together coordinate a divalent metal cation. Substrate contacts are provided by K284, N293, and R302.

It belongs to the PdxA family. PdxA2 subfamily. In terms of assembly, homodimer. Requires a divalent metal cation as cofactor.

The enzyme catalyses 4-O-phospho-D-threonate + NAD(+) = dihydroxyacetone phosphate + CO2 + NADH. Functionally, catalyzes the NAD-dependent oxidation and subsequent decarboxylation of D-threonate 4-phosphate to produce dihydroxyacetone phosphate (DHAP). Can also use 4-hydroxy-L-threonine 4-phosphate as substrate. The sequence is that of D-threonate 4-phosphate dehydrogenase from Bordetella bronchiseptica (strain ATCC BAA-588 / NCTC 13252 / RB50) (Alcaligenes bronchisepticus).